We begin with the raw amino-acid sequence, 188 residues long: MNLPESIQKGILLIIELGILLGSMGVILLNDIVQSAFSLGLTFISISLLYLVLNADFVAAAQVLIYVGAINVLIVFSVMLIQKPHKNEDLSTSRNTGNNITLIVCTSLFLFLVSIILDTSWSQIYSIKKSTKIFEPILKSNVQLIGSQLLTEFLLPFELLSVLLLVALVGAITMSRQSRMFEMPDDEI.

A run of 5 helical transmembrane segments spans residues 10–30 (GILL…ILLN), 32–52 (IVQS…LYLV), 61–81 (AQVL…VMLI), 97–117 (GNNI…SIIL), and 153–173 (FLLP…GAIT).

It belongs to the complex I subunit 6 family. NDH is composed of at least 16 different subunits, 5 of which are encoded in the nucleus.

It localises to the plastid. The protein resides in the chloroplast thylakoid membrane. The catalysed reaction is a plastoquinone + NADH + (n+1) H(+)(in) = a plastoquinol + NAD(+) + n H(+)(out). It carries out the reaction a plastoquinone + NADPH + (n+1) H(+)(in) = a plastoquinol + NADP(+) + n H(+)(out). In terms of biological role, NDH shuttles electrons from NAD(P)H:plastoquinone, via FMN and iron-sulfur (Fe-S) centers, to quinones in the photosynthetic chain and possibly in a chloroplast respiratory chain. The immediate electron acceptor for the enzyme in this species is believed to be plastoquinone. Couples the redox reaction to proton translocation, and thus conserves the redox energy in a proton gradient. The chain is NAD(P)H-quinone oxidoreductase subunit 6, chloroplastic (ndhG) from Psilotum nudum (Whisk fern).